Here is a 487-residue protein sequence, read N- to C-terminus: Benzaldehyde dehydrogenase [NAD(+)] (487 aa).

232 to 237 contributes to the NAD(+) binding site; it reads GSTQVG. Active-site residues include Glu-254 and Cys-288.

It belongs to the aldehyde dehydrogenase family. In terms of assembly, homotetramer.

The enzyme catalyses benzaldehyde + NAD(+) + H2O = benzoate + NADH + 2 H(+). This chain is Benzaldehyde dehydrogenase [NAD(+)] (xylC), found in Pseudomonas putida (Arthrobacter siderocapsulatus).